The primary structure comprises 197 residues: dCTP deaminase (197 aa).

Residue 105–110 (RSSIAR) participates in dCTP binding. Glu133 acts as the Proton donor/acceptor in catalysis. The dCTP site is built by Tyr166 and Gln177. The tract at residues 172–197 (NKYAGQKDPKPSRLAEELSLEQLRGR) is disordered. Basic and acidic residues predominate over residues 176 to 187 (GQKDPKPSRLAE).

This sequence belongs to the dCTP deaminase family. Homotrimer.

It catalyses the reaction dCTP + H2O + H(+) = dUTP + NH4(+). It functions in the pathway pyrimidine metabolism; dUMP biosynthesis; dUMP from dCTP (dUTP route): step 1/2. Functionally, catalyzes the deamination of dCTP to dUTP. The polypeptide is dCTP deaminase (Thermomicrobium roseum (strain ATCC 27502 / DSM 5159 / P-2)).